We begin with the raw amino-acid sequence, 107 residues long: C-X-C motif chemokine 2 (107 aa).

Positions 1–34 (MARATLSAAPSNPRLLRVALLLLLLVAASRRAAG) are cleaved as a signal peptide. 2 cysteine pairs are disulfide-bonded: Cys-43-Cys-69 and Cys-45-Cys-85.

It belongs to the intercrine alpha (chemokine CxC) family. In terms of processing, the N-terminal processed form GRO-beta(5-73) is produced by proteolytic cleavage after secretion from bone marrow stromal cells.

It is found in the secreted. Functionally, produced by activated monocytes and neutrophils and expressed at sites of inflammation. Hematoregulatory chemokine, which, in vitro, suppresses hematopoietic progenitor cell proliferation. GRO-beta(5-73) shows a highly enhanced hematopoietic activity. The chain is C-X-C motif chemokine 2 (CXCL2) from Homo sapiens (Human).